A 50-amino-acid chain; its full sequence is Defensin D1 (50 aa).

4 disulfide bridges follow: Cys3-Cys50, Cys14-Cys35, Cys20-Cys44, and Cys24-Cys46.

Contains 4 disulfide bonds.

The protein localises to the secreted. In terms of biological role, antimicrobial peptide active against fungi, Gram-positive and Gram-negative bacteria. Inhibits growth of hyphae in the fungi A.niger (IC(50)=3.5 ug/ml), B.sorokiniana (IC(50)=3.0 ug/ml), F.oxysporum (IC(50)=9.5 ug/ml), F.graminearum (IC(50)=6.9 ug/ml), F.culmorum (IC(50)=6.9 ug/ml) and B.cinerea (IC(50)=27.4 ug/ml). Has no effect on spore germination. Destroys spores in germinated conidia by disruption of cell walls and membranes in A.niger and B.sorokiniana. Causes vacuolization of germinated macro- and microconidia in F.oxysporum, F.graminearum and F.culmorum. Strongly inhibits growth of P.infestans on potato tubers above concentrations of 13.6 ug/ml. Inhibits growth of Gram-positive bacteria C.michiganensis and B.subtilis and of Gram-negative bacteria P.syringae, E.carotovora and E.coli. The chain is Defensin D1 from Nigella sativa (Black cumin).